The following is a 355-amino-acid chain: Peptide chain release factor 1 (355 aa).

At Q233 the chain carries N5-methylglutamine.

Belongs to the prokaryotic/mitochondrial release factor family. In terms of processing, methylated by PrmC. Methylation increases the termination efficiency of RF1.

The protein localises to the cytoplasm. In terms of biological role, peptide chain release factor 1 directs the termination of translation in response to the peptide chain termination codons UAG and UAA. The protein is Peptide chain release factor 1 of Desulforudis audaxviator (strain MP104C).